The following is a 159-amino-acid chain: Large ribosomal subunit protein uL10 (159 aa).

The protein belongs to the universal ribosomal protein uL10 family. As to quaternary structure, part of the ribosomal stalk of the 50S ribosomal subunit. The N-terminus interacts with L11 and the large rRNA to form the base of the stalk. The C-terminus forms an elongated spine to which L12 dimers bind in a sequential fashion forming a multimeric L10(L12)X complex.

In terms of biological role, forms part of the ribosomal stalk, playing a central role in the interaction of the ribosome with GTP-bound translation factors. This Campylobacter jejuni subsp. jejuni serotype O:6 (strain 81116 / NCTC 11828) protein is Large ribosomal subunit protein uL10.